The chain runs to 392 residues: L-rhamnonate dehydratase (392 aa).

Substrate contacts are provided by H22 and R48. Residues D214, E240, and E268 each coordinate Mg(2+). H318 serves as the catalytic Proton acceptor. E338 is a substrate binding site.

It belongs to the mandelate racemase/muconate lactonizing enzyme family. RhamD subfamily. As to quaternary structure, homooctamer; tetramer of dimers. The cofactor is Mg(2+).

The enzyme catalyses L-rhamnonate = 2-dehydro-3-deoxy-L-rhamnonate + H2O. Catalyzes the dehydration of L-rhamnonate to 2-keto-3-deoxy-L-rhamnonate (KDR). This is L-rhamnonate dehydratase from Paraburkholderia phymatum (strain DSM 17167 / CIP 108236 / LMG 21445 / STM815) (Burkholderia phymatum).